Consider the following 337-residue polypeptide: uncharacterized protein (337 aa).

Residues 22 to 76 enclose the F-box domain; the sequence is PFRLLSLPTLALKNVLLHIDFIDLLELSLASKKCEIYMKTCCLKIDSLHFHFRRI.

This is an uncharacterized protein from Caenorhabditis elegans.